Here is a 336-residue protein sequence, read N- to C-terminus: MAHVAEWKKKEVQELHDLIKGYEVVGIANLADIPARQLQKMRQTLRDSALIRMSKKTLISLALEKAGRELENVDSLSDYMEGQPALIFTDMNPFKLFKILEDSKTPAPAKPGAIAPDDIVVPKGDTGFAPGPILGELQQIGIPAKIEKGKIVVSNDHVVVKAGEEIPPKVAGILTRLDIQPLEVGIDLRAAYENQTVYTADVLTIDEEKTLSDIQKAFSQAFNLSVNAVIYTRETMPAIIQKAASKSFNLAYNASILTSETTDLLLAKAYAQMLALAAAAAEINDEAVDDELKEKLSSRAAAPAPEEKEEEVEEEAEEEEEEEEEDAAAGLGALFG.

Positions 292-336 (LKEKLSSRAAAPAPEEKEEEVEEEAEEEEEEEEEDAAAGLGALFG) are disordered. Positions 307-327 (EKEEEVEEEAEEEEEEEEEDA) are enriched in acidic residues.

It belongs to the universal ribosomal protein uL10 family. In terms of assembly, part of the 50S ribosomal subunit. Forms part of the ribosomal stalk which helps the ribosome interact with GTP-bound translation factors. Forms a heptameric L10(L12)2(L12)2(L12)2 complex, where L10 forms an elongated spine to which the L12 dimers bind in a sequential fashion.

Forms part of the ribosomal stalk, playing a central role in the interaction of the ribosome with GTP-bound translation factors. The protein is Large ribosomal subunit protein uL10 of Methanothermobacter thermautotrophicus (strain ATCC 29096 / DSM 1053 / JCM 10044 / NBRC 100330 / Delta H) (Methanobacterium thermoautotrophicum).